We begin with the raw amino-acid sequence, 216 residues long: Adenylate kinase (216 aa).

ATP is bound at residue 10 to 15 (GSGKGT). Residues 30–59 (STGEILRKEIKKNKKTKKYIKKTINKGKLI) form an NMP region. Residues Thr-31, Arg-36, 57–59 (KLI), 85–88 (GFPR), and Gln-92 each bind AMP. The segment at 121–158 (GRLIHASSGRTYHKIFNPPKIKNKDDITQEKLCSRNDD) is LID. ATP contacts are provided by residues Arg-122 and 131–132 (TY). Arg-155 and Arg-166 together coordinate AMP. Residue Gln-196 participates in ATP binding.

It belongs to the adenylate kinase family. In terms of assembly, monomer.

The protein resides in the cytoplasm. It catalyses the reaction AMP + ATP = 2 ADP. It functions in the pathway purine metabolism; AMP biosynthesis via salvage pathway; AMP from ADP: step 1/1. Its function is as follows. Catalyzes the reversible transfer of the terminal phosphate group between ATP and AMP. Plays an important role in cellular energy homeostasis and in adenine nucleotide metabolism. This is Adenylate kinase from Buchnera aphidicola subsp. Cinara cedri (strain Cc).